Reading from the N-terminus, the 125-residue chain is uncharacterized protein (125 aa).

The region spanning Ile-19–Phe-73 is the HTH cro/C1-type domain. Residues Arg-30 to Lys-49 constitute a DNA-binding region (H-T-H motif).

This is an uncharacterized protein from Rickettsia conorii (strain ATCC VR-613 / Malish 7).